The primary structure comprises 696 residues: Spindle assembly checkpoint component MAD1 (696 aa).

2 disordered regions span residues 1–22 (MSTGSSPFVDHKSNNSTISINN) and 394–415 (QIHANQQHKQQEQEKEENTENK). Basic and acidic residues predominate over residues 402 to 413 (KQQEQEKEENTE).

It belongs to the MAD1 family. In terms of assembly, component of the mitotic checkpoint complex (MCC).

The protein resides in the nucleus. In terms of biological role, central component of the spindle assembly checkpoint which is a feedback control that prevents cells with incompletely assembled spindles from leaving mitosis. The protein is Spindle assembly checkpoint component MAD1 of Candida albicans (strain SC5314 / ATCC MYA-2876) (Yeast).